The chain runs to 450 residues: MNRSILKFVKNGIISSSSRINNNGFINKNNNNRWFATLPQPNRGIAGEKQPIYLDMQSTTPIDPRVLDAMLPLYTENYGNPHSKTHAYGWTSNDLVEDAREKVSKIIGADSKEIIFTSGATESGNIAIKGVARFYKEKKNHIITTVTEHKCILDSCRHLEMEGFKVTYLPVGENGLVDLELLKNTITPQTSLVTIMAVNNEIGVVQPIKEIGKICRENGVFFHTDAAQAVGKIPIDVNDMNIDLLSISGHKIYGPKGVGALFVRRRPRVRIEPITTGGGQERGIRSGTVPSTLAVGLGAACDIALKEMNHDAAWVKYLYDRLLKGITDNIPNVKVNGDLNARYYGNLNISFSYVEGESLLMAIKDVACSSGSACTSSSLEPSYVLRSLGVEEDMAHSSIRFGIGRFTTEQEIDYTIEILKKNVQRLRDMSPLWEMVQEGIDIKTIEWSQI.

A mitochondrion-targeting transit peptide spans 1 to 52 (MNRSILKFVKNGIISSSSRINNNGFINKNNNNRWFATLPQPNRGIAGEKQPI). Residues 120 to 121 (AT), asparagine 200, glutamine 228, and 248 to 250 (SGH) each bind pyridoxal 5'-phosphate. Position 251 is an N6-(pyridoxal phosphate)lysine (lysine 251). Threonine 288 serves as a coordination point for pyridoxal 5'-phosphate. The Cysteine persulfide intermediate role is filled by cysteine 374. Cysteine 374 is a binding site for [2Fe-2S] cluster.

It belongs to the class-V pyridoxal-phosphate-dependent aminotransferase family. NifS/IscS subfamily. Requires pyridoxal 5'-phosphate as cofactor.

The protein localises to the mitochondrion. It is found in the nucleus. The enzyme catalyses (sulfur carrier)-H + L-cysteine = (sulfur carrier)-SH + L-alanine. Functionally, catalyzes the removal of elemental sulfur from cysteine to produce alanine. It supplies the inorganic sulfur for iron-sulfur (Fe-S) clusters. The sequence is that of Probable cysteine desulfurase, mitochondrial (nfs1) from Dictyostelium discoideum (Social amoeba).